We begin with the raw amino-acid sequence, 143 residues long: Transcriptional regulator MraZ (143 aa).

2 SpoVT-AbrB domains span residues 5 to 47 (TYTP…PRDE) and 76 to 119 (TDEQ…DAQA).

The protein belongs to the MraZ family. As to quaternary structure, forms oligomers.

It localises to the cytoplasm. It is found in the nucleoid. The polypeptide is Transcriptional regulator MraZ (Mycolicibacterium smegmatis (strain ATCC 700084 / mc(2)155) (Mycobacterium smegmatis)).